A 158-amino-acid polypeptide reads, in one-letter code: MICENVETFAEALPRTGAVAGLDLGTKTIGVAVSDGLRGVASPLTVIRRTKFTADAQALLKIVQDRALVGLVLGLPRNMDGSEGPRAQSTRAFARNLERLTPLPITFWDERLSTVAAERALLEGDTSRKRRAEVIDQVAAGYILQGALDRLRFLGRTE.

This sequence belongs to the YqgF nuclease family.

The protein localises to the cytoplasm. Could be a nuclease involved in processing of the 5'-end of pre-16S rRNA. The chain is Putative pre-16S rRNA nuclease from Paracoccus denitrificans (strain Pd 1222).